The sequence spans 667 residues: Soluble guanylate cyclase 89Da (667 aa).

His-104 is a binding site for heme. The disordered stretch occupies residues 337–364; that stretch reads AQEFSESHPVDDDESAREDEIDPATGER. Over residues 347 to 358 the composition is skewed to acidic residues; it reads DDDESAREDEID. Positions 427–455 form a coiled coil; it reads QHCSKLEIMFEKEEQRSDELEKSLELADS. Residues 491–617 enclose the Guanylate cyclase domain; sequence SVIFLEVMNV…DTVNTASRME (127 aa).

Belongs to the adenylyl cyclase class-4/guanylyl cyclase family. In terms of assembly, heterodimer; with Gyc88E, in the presence of magnesium or manganese. Requires heme as cofactor.

It is found in the cytoplasm. It carries out the reaction GTP = 3',5'-cyclic GMP + diphosphate. Its activity is regulated as follows. Probably not activated by nitric oxide (NO). Heterodimer also exhibits some stimulation, some compounds (SIN-1 and two of the NONOates) that were ineffective at stimulating Gyc-88E alone did stimulate the heterodimer. Its function is as follows. Heterodimers with Gyc-89Da and Gyc-89Db are activated in response to changing oxygen concentrations, alerting flies to hypoxic environments. Under normal oxygen concentrations, oxygen binds to the heme group and results in low levels of guanylyl cyclase activity. When exposed to reduced oxygen concentrations, the oxygen dissociates from the heme group resulting in activation of the enzyme. The protein is Soluble guanylate cyclase 89Da of Drosophila melanogaster (Fruit fly).